Consider the following 158-residue polypeptide: Transcription elongation factor GreA (158 aa).

Residues 1 to 67 (MSNNIPLTKE…FIEGRIQELQ (67 aa)) adopt a coiled-coil conformation.

The protein belongs to the GreA/GreB family.

In terms of biological role, necessary for efficient RNA polymerase transcription elongation past template-encoded arresting sites. The arresting sites in DNA have the property of trapping a certain fraction of elongating RNA polymerases that pass through, resulting in locked ternary complexes. Cleavage of the nascent transcript by cleavage factors such as GreA or GreB allows the resumption of elongation from the new 3'terminus. GreA releases sequences of 2 to 3 nucleotides. The sequence is that of Transcription elongation factor GreA from Trichlorobacter lovleyi (strain ATCC BAA-1151 / DSM 17278 / SZ) (Geobacter lovleyi).